A 732-amino-acid chain; its full sequence is Anthranilate synthase (732 aa).

Residues 533–728 (RVLLVDHDDS…MDRLAAGALT (196 aa)) form the Glutamine amidotransferase type-1 domain. An L-glutamine-binding site is contributed by 583–585 (GPG). C610 acts as the Nucleophile; for GATase activity in catalysis. Residues Q614 and 660–661 (SL) each bind L-glutamine. Catalysis depends on for GATase activity residues H699 and E701.

It catalyses the reaction chorismate + L-glutamine = anthranilate + pyruvate + L-glutamate + H(+). Its pathway is amino-acid biosynthesis; L-tryptophan biosynthesis; L-tryptophan from chorismate: step 1/5. In Azospirillum brasilense, this protein is Anthranilate synthase (trpE(G)).